The following is a 532-amino-acid chain: CTP synthase (532 aa).

An amidoligase domain region spans residues 1-265; the sequence is MKYIVVTGGV…DEYLMRKLNL (265 aa). A CTP-binding site is contributed by S12. S12 serves as a coordination point for UTP. Residues 13 to 18 and D70 contribute to the ATP site; that span reads GLGKGI. Mg(2+) is bound by residues D70 and E140. CTP is bound by residues 147–149, 186–191, and K222; these read DIE and KTKPTQ. UTP contacts are provided by residues 186-191 and K222; that span reads KTKPTQ. Residues 289–529 form the Glutamine amidotransferase type-1 domain; the sequence is SIAIVGKYVD…VRAALKYRRE (241 aa). G349 serves as a coordination point for L-glutamine. C376 acts as the Nucleophile; for glutamine hydrolysis in catalysis. Residues 377–380, E400, and R457 contribute to the L-glutamine site; that span reads FGFQ. Catalysis depends on residues H502 and E504.

Belongs to the CTP synthase family. Homotetramer.

It carries out the reaction UTP + L-glutamine + ATP + H2O = CTP + L-glutamate + ADP + phosphate + 2 H(+). The enzyme catalyses L-glutamine + H2O = L-glutamate + NH4(+). The catalysed reaction is UTP + NH4(+) + ATP = CTP + ADP + phosphate + 2 H(+). The protein operates within pyrimidine metabolism; CTP biosynthesis via de novo pathway; CTP from UDP: step 2/2. Allosterically activated by GTP, when glutamine is the substrate; GTP has no effect on the reaction when ammonia is the substrate. The allosteric effector GTP functions by stabilizing the protein conformation that binds the tetrahedral intermediate(s) formed during glutamine hydrolysis. Inhibited by the product CTP, via allosteric rather than competitive inhibition. In terms of biological role, catalyzes the ATP-dependent amination of UTP to CTP with either L-glutamine or ammonia as the source of nitrogen. Regulates intracellular CTP levels through interactions with the four ribonucleotide triphosphates. The protein is CTP synthase of Archaeoglobus fulgidus (strain ATCC 49558 / DSM 4304 / JCM 9628 / NBRC 100126 / VC-16).